The primary structure comprises 1547 residues: Fatty acid synthase subunit alpha (1547 aa).

The segment at 94-121 (TLPEAHPPPPIDSHQEPSTQTQATHRSA) is disordered. Residues 109–118 (EPSTQTQATH) are compositionally biased toward polar residues. One can recognise a Carrier domain in the interval 145-221 (LPVSTIVRSL…ETMSIGHNGR (77 aa)). Position 180 is an O-(pantetheine 4'-phosphoryl)serine (Ser-180). The interval 563-798 (GKNVLITGAG…ATLMGGTITT (236 aa)) is ketoreductase (KR) domain. A Ketosynthase family 3 (KS3) domain is found at 1004–1476 (KESLQEIVLQ…QKGSQAILIH (473 aa)). Active-site for beta-ketoacyl synthase activity residues include Cys-1190 and His-1442.

The protein belongs to the thiolase-like superfamily. Fungal fatty acid synthetase subunit alpha family. It depends on pantetheine 4'-phosphate as a cofactor.

It carries out the reaction acetyl-CoA + n malonyl-CoA + 2n NADPH + 4n H(+) = a long-chain-acyl-CoA + n CoA + n CO2 + 2n NADP(+).. The catalysed reaction is a fatty acyl-[ACP] + malonyl-[ACP] + H(+) = a 3-oxoacyl-[ACP] + holo-[ACP] + CO2. The enzyme catalyses a (3R)-hydroxyacyl-[ACP] + NADP(+) = a 3-oxoacyl-[ACP] + NADPH + H(+). It functions in the pathway mycotoxin biosynthesis; HC-toxin biosynthesis. Functionally, fatty acid synthase alpha subunit, part of the diffuse TOX2 gene cluster that mediates the biosynthesis of the HC-toxin, cyclic tetrapeptide of structure cyclo(D-Pro-L-Ala-D-Ala-L-Aeo), where Aeo stands for 2-amino-9,10-epoxi-8-oxodecanoic acid. HC-toxin is a determinant of specificity and virulence in the interaction between the producing fungus and its host, maize. TOXH contribute to the synthesis of the decanoic backbone of 2-amino-9,10-epoxi-8-oxodecanoic acid, an essential precursor for the production of the major forms of HC-toxin by the non-ribosomal peptide synthetase HTS1. In Cochliobolus carbonum (Maize leaf spot fungus), this protein is Fatty acid synthase subunit alpha.